Consider the following 163-residue polypeptide: Disulfide bond formation protein B (163 aa).

At Met-1–Ile-9 the chain is on the cytoplasmic side. A helical membrane pass occupies residues Gln-10 to Tyr-26. The Periplasmic portion of the chain corresponds to Leu-27–Val-44. A disulfide bridge connects residues Cys-36 and Cys-39. The chain crosses the membrane as a helical span at residues Cys-45–Gly-58. Over Thr-59–His-64 the chain is Cytoplasmic. Residues Ile-65–Leu-82 form a helical membrane-spanning segment. The Periplasmic portion of the chain corresponds to Arg-83–Gly-139. The cysteines at positions 98 and 125 are disulfide-linked. The chain crosses the membrane as a helical span at residues Trp-140–Arg-158. The Cytoplasmic segment spans residues Thr-159–Asn-163.

The protein belongs to the DsbB family.

The protein localises to the cell inner membrane. In terms of biological role, required for disulfide bond formation in some periplasmic proteins. Acts by oxidizing the DsbA protein. This chain is Disulfide bond formation protein B, found in Legionella pneumophila (strain Lens).